A 144-amino-acid chain; its full sequence is Phospholipase A2, membrane associated (144 aa).

The first 20 residues, 1–20, serve as a signal peptide directing secretion; it reads MKTLLLLAVIMAIGLLQVHG. 7 disulfide bridges follow: cysteine 46–cysteine 137, cysteine 48–cysteine 64, cysteine 63–cysteine 117, cysteine 69–cysteine 144, cysteine 70–cysteine 110, cysteine 79–cysteine 103, and cysteine 97–cysteine 108. Ca(2+)-binding residues include tyrosine 47, glycine 49, and serine 51. The active site involves histidine 67. Aspartate 68 is a binding site for Ca(2+). Aspartate 111 is an active-site residue.

It belongs to the phospholipase A2 family. It depends on Ca(2+) as a cofactor.

Its subcellular location is the secreted. It localises to the cell membrane. It is found in the mitochondrion outer membrane. It catalyses the reaction a 1,2-diacyl-sn-glycero-3-phosphoethanolamine + H2O = a 1-acyl-sn-glycero-3-phosphoethanolamine + a fatty acid + H(+). The catalysed reaction is 1-hexadecanoyl-2-(9Z-octadecenoyl)-sn-glycero-3-phosphoethanolamine + H2O = 1-hexadecanoyl-sn-glycero-3-phosphoethanolamine + (9Z)-octadecenoate + H(+). It carries out the reaction 1-hexadecanoyl-2-(9Z,12Z-octadecadienoyl)-sn-glycero-3-phosphoethanolamine + H2O = 1-hexadecanoyl-sn-glycero-3-phosphoethanolamine + (9Z,12Z)-octadecadienoate + H(+). The enzyme catalyses 1-hexadecanoyl-2-(5Z,8Z,11Z,14Z-eicosatetraenoyl)-sn-glycero-3-phosphoethanolamine + H2O = 1-hexadecanoyl-sn-glycero-3-phosphoethanolamine + (5Z,8Z,11Z,14Z)-eicosatetraenoate + H(+). It catalyses the reaction N-hexadecanoyl-1,2-di-(9Z-octadecenoyl)-sn-glycero-3-phosphoethanolamine + H2O = N-hexadecanoyl-1-(9Z-octadecenoyl)-sn-glycero-3-phosphoethanolamine + (9Z)-octadecenoate + H(+). The catalysed reaction is 1,2-dihexadecanoyl-sn-glycero-3-phospho-(1'-sn-glycerol) + H2O = 1-hexadecanoyl-sn-glycero-3-phospho-(1'-sn-glycerol) + hexadecanoate + H(+). It carries out the reaction 1-hexadecanoyl-2-(9Z-octadecenoyl)-sn-glycero-3-phosphoglycerol + H2O = 1-hexadecanoyl-sn-glycero-3-phosphoglycerol + (9Z)-octadecenoate + H(+). The enzyme catalyses 1-hexadecanoyl-2-(9Z-octadecenoyl)-sn-glycero-3-phospho-(1'-sn-glycerol) + H2O = 1-hexadecanoyl-sn-glycero-3-phospho-(1'-sn-glycerol) + (9Z)-octadecenoate + H(+). It catalyses the reaction a 1,2-diacyl-sn-glycero-3-phosphocholine + H2O = a 1-acyl-sn-glycero-3-phosphocholine + a fatty acid + H(+). The catalysed reaction is 1,2-dihexadecanoyl-sn-glycero-3-phosphocholine + H2O = 1-hexadecanoyl-sn-glycero-3-phosphocholine + hexadecanoate + H(+). It carries out the reaction 1-hexadecanoyl-2-(9Z-octadecenoyl)-sn-glycero-3-phosphocholine + H2O = 1-hexadecanoyl-sn-glycero-3-phosphocholine + (9Z)-octadecenoate + H(+). The enzyme catalyses 1-hexadecanoyl-2-(9Z,12Z-octadecadienoyl)-sn-glycero-3-phosphocholine + H2O = (9Z,12Z)-octadecadienoate + 1-hexadecanoyl-sn-glycero-3-phosphocholine + H(+). It catalyses the reaction 1-hexadecanoyl-2-(4Z,7Z,10Z,13Z,16Z,19Z-docosahexaenoyl)-sn-glycero-3-phosphocholine + H2O = (4Z,7Z,10Z,13Z,16Z,19Z)-docosahexaenoate + 1-hexadecanoyl-sn-glycero-3-phosphocholine + H(+). Secretory calcium-dependent phospholipase A2 that primarily targets extracellular phospholipids with implications in host antimicrobial defense, inflammatory response and tissue regeneration. Hydrolyzes the ester bond of the fatty acyl group attached at sn-2 position of phospholipids (phospholipase A2 activity) with preference for phosphatidylethanolamines and phosphatidylglycerols over phosphatidylcholines. Contributes to lipid remodeling of cellular membranes and generation of lipid mediators involved in pathogen clearance. Displays bactericidal activity against Gram-positive bacteria by directly hydrolyzing phospholipids of the bacterial membrane. Upon sterile inflammation, targets membrane phospholipids of extracellular mitochondria released from activated platelets, generating free unsaturated fatty acids such as arachidonate that is used by neighboring leukocytes to synthesize inflammatory eicosanoids such as leukotrienes. Simultaneously, by compromising mitochondrial membrane integrity, promotes the release in circulation of potent damage-associated molecular pattern molecules that activate the innate immune response. Plays a stem cell regulator role in the intestinal crypt. Within intracellular compartment mediates Paneth cell differentiation and its stem cell supporting functions by inhibiting Wnt signaling pathway in intestinal stem cell (ICS). Secreted in the intestinal lumen upon inflammation, acts in an autocrine way and promotes prostaglandin E2 synthesis that stimulates Wnt signaling pathway in ICS cells and tissue regeneration. May play a role in the biosynthesis of N-acyl ethanolamines that regulate energy metabolism and inflammation. Hydrolyzes N-acyl phosphatidylethanolamines to N-acyl lysophosphatidylethanolamines, which are further cleaved by a lysophospholipase D to release N-acyl ethanolamines. Independent of its catalytic activity, acts as a ligand for integrins. Binds to and activates integrins ITGAV:ITGB3, ITGA4:ITGB1 and ITGA5:ITGB1. Binds to a site (site 2) which is distinct from the classical ligand-binding site (site 1) and induces integrin conformational changes and enhanced ligand binding to site 1. Induces cell proliferation in an integrin-dependent manner. The polypeptide is Phospholipase A2, membrane associated (PLA2G2A) (Bos taurus (Bovine)).